Here is a 409-residue protein sequence, read N- to C-terminus: Accessory Sec system protein translocase subunit SecY2 (409 aa).

10 consecutive transmembrane segments (helical) span residues 16-36 (ILIT…PIPG), 61-81 (LSQV…MILL), 104-124 (VVML…FQYH), 132-152 (LLLA…IGNL), 161-181 (MTIL…PLIF), 190-210 (LAII…ITFE), 242-262 (GMAF…IILL), 286-306 (GVVI…FVNI), 341-361 (LFGT…LLFA), and 374-394 (TGIF…FQVI).

It belongs to the SecY/SEC61-alpha family. SecY2 subfamily. As to quaternary structure, component of the accessory SecA2/SecY2 protein translocase complex required to export cell wall proteins. May form heterotrimers with SecE and SecG subunits.

Its subcellular location is the cell membrane. In terms of biological role, part of the accessory SecA2/SecY2 system specifically required for export of possible cell wall proteins. The central subunit of a protein translocation channel. The sequence is that of Accessory Sec system protein translocase subunit SecY2 from Streptococcus agalactiae serotype III (strain NEM316).